We begin with the raw amino-acid sequence, 160 residues long: Photosystem II extrinsic protein V (160 aa).

Residues 1–25 (MKRFILLAIATVFFFCQFQTNPVNA) form the signal peptide. 4 residues coordinate heme c: Cys-62, Cys-65, His-66, and His-117.

This sequence belongs to the cytochrome c family. PsbV subfamily. PSII is composed of 1 copy each of membrane proteins PsbA, PsbB, PsbC, PsbD, PsbE, PsbF, PsbH, PsbI, PsbJ, PsbK, PsbL, PsbM, PsbT, PsbX, PsbY, PsbZ, Psb30/Ycf12, peripheral proteins PsbO, CyanoQ (PsbQ), PsbU, PsbV and a large number of cofactors. It forms dimeric complexes. The cofactor is heme c.

It localises to the cellular thylakoid membrane. Its function is as follows. One of the extrinsic, lumenal subunits of photosystem II (PSII). PSII is a light-driven water plastoquinone oxidoreductase, using light energy to abstract electrons from H(2)O, generating a proton gradient subsequently used for ATP formation. The extrinsic proteins stabilize the structure of photosystem II oxygen-evolving complex (OEC), the ion environment of oxygen evolution and protect the OEC against heat-induced inactivation. Low-potential cytochrome c that plays a role in the OEC of PSII. The chain is Photosystem II extrinsic protein V from Rippkaea orientalis (strain PCC 8801 / RF-1) (Cyanothece sp. (strain PCC 8801)).